Consider the following 354-residue polypeptide: GTPase Obg (354 aa).

Positions 1–159 constitute an Obg domain; it reads MKFVDEVKIH…RDLVLELKLL (159 aa). The OBG-type G domain occupies 160–333; sequence ADVGIVGYPN…LLDAVGRALF (174 aa). GTP is bound by residues 166–173, 191–195, 212–215, 283–286, and 314–316; these read GYPNAGKS, FTTLT, DIPG, TKID, and SAV. Mg(2+)-binding residues include S173 and T193.

The protein belongs to the TRAFAC class OBG-HflX-like GTPase superfamily. OBG GTPase family. In terms of assembly, monomer. Mg(2+) serves as cofactor.

The protein localises to the cytoplasm. An essential GTPase which binds GTP, GDP and possibly (p)ppGpp with moderate affinity, with high nucleotide exchange rates and a fairly low GTP hydrolysis rate. Plays a role in control of the cell cycle, stress response, ribosome biogenesis and in those bacteria that undergo differentiation, in morphogenesis control. The polypeptide is GTPase Obg (Anaeromyxobacter dehalogenans (strain 2CP-C)).